The chain runs to 429 residues: Glutamate-1-semialdehyde 2,1-aminomutase (429 aa).

An N6-(pyridoxal phosphate)lysine modification is found at K267.

It belongs to the class-III pyridoxal-phosphate-dependent aminotransferase family. HemL subfamily. As to quaternary structure, homodimer. It depends on pyridoxal 5'-phosphate as a cofactor.

The protein localises to the cytoplasm. It catalyses the reaction (S)-4-amino-5-oxopentanoate = 5-aminolevulinate. The protein operates within porphyrin-containing compound metabolism; protoporphyrin-IX biosynthesis; 5-aminolevulinate from L-glutamyl-tRNA(Glu): step 2/2. The polypeptide is Glutamate-1-semialdehyde 2,1-aminomutase (Stenotrophomonas maltophilia (strain R551-3)).